A 102-amino-acid chain; its full sequence is 10 kDa heat shock protein, mitochondrial (102 aa).

Residue Ala2 is modified to N-acetylalanine. Lys8 is subject to N6-acetyllysine. Position 28 is an N6-succinyllysine (Lys28). Lys40 is subject to N6-acetyllysine; alternate. 3 positions are modified to N6-malonyllysine; alternate: Lys40, Lys54, and Lys56. An N6-succinyllysine; alternate mark is found at Lys40, Lys54, Lys56, Lys66, and Lys70. 3 positions are modified to N6-acetyllysine; alternate: Lys56, Lys66, and Lys70. Phosphothreonine is present on Thr79. An N6-acetyllysine; alternate mark is found at Lys80 and Lys86. Residues Lys80 and Lys86 each carry the N6-succinyllysine; alternate modification. Lys99 carries the N6-acetyllysine modification.

This sequence belongs to the GroES chaperonin family. Homoheptamer arranged in a ring structure. 2 heptameric Hsp10 rings interact with a Hsp60 tetradecamer in the structure of a back-to-back double heptameric ring to form the symmetrical football complex.

The protein resides in the mitochondrion matrix. Its function is as follows. Co-chaperonin implicated in mitochondrial protein import and macromolecular assembly. Together with Hsp60, facilitates the correct folding of imported proteins. May also prevent misfolding and promote the refolding and proper assembly of unfolded polypeptides generated under stress conditions in the mitochondrial matrix. The functional units of these chaperonins consist of heptameric rings of the large subunit Hsp60, which function as a back-to-back double ring. In a cyclic reaction, Hsp60 ring complexes bind one unfolded substrate protein per ring, followed by the binding of ATP and association with 2 heptameric rings of the co-chaperonin Hsp10. This leads to sequestration of the substrate protein in the inner cavity of Hsp60 where, for a certain period of time, it can fold undisturbed by other cell components. Synchronous hydrolysis of ATP in all Hsp60 subunits results in the dissociation of the chaperonin rings and the release of ADP and the folded substrate protein. The polypeptide is 10 kDa heat shock protein, mitochondrial (HSPE1) (Bos taurus (Bovine)).